A 447-amino-acid chain; its full sequence is Methylenetetrahydrofolate--tRNA-(uracil-5-)-methyltransferase TrmFO (447 aa).

Position 13 to 18 (13 to 18 (GAGLAG)) interacts with FAD.

The protein belongs to the MnmG family. TrmFO subfamily. FAD serves as cofactor.

Its subcellular location is the cytoplasm. It carries out the reaction uridine(54) in tRNA + (6R)-5,10-methylene-5,6,7,8-tetrahydrofolate + NADH + H(+) = 5-methyluridine(54) in tRNA + (6S)-5,6,7,8-tetrahydrofolate + NAD(+). It catalyses the reaction uridine(54) in tRNA + (6R)-5,10-methylene-5,6,7,8-tetrahydrofolate + NADPH + H(+) = 5-methyluridine(54) in tRNA + (6S)-5,6,7,8-tetrahydrofolate + NADP(+). Functionally, catalyzes the folate-dependent formation of 5-methyl-uridine at position 54 (M-5-U54) in all tRNAs. The protein is Methylenetetrahydrofolate--tRNA-(uracil-5-)-methyltransferase TrmFO of Streptococcus thermophilus (strain CNRZ 1066).